The primary structure comprises 2273 residues: Nonribosomal peptide synthetase hasD (2273 aa).

Residues 100 to 446 (FHDQLQKHSS…AGLGLALGYF (347 aa)) are adenylation 1. One can recognise a Carrier 1 domain in the interval 588–664 (ERGLGAVESV…NIAAAVVELS (77 aa)). Ser-625 carries the O-(pantetheine 4'-phosphoryl)serine modification. Positions 696–1120 (IAPMTDMQTR…AAQPDTDLSN (425 aa)) are condensation 1. Positions 1156-1487 (ENSIQAHPDI…SGVQVTPGYL (332 aa)) are adenylation 2. The Carrier 2 domain maps to 1634 to 1714 (DLETDTQRVL…DLSLAIDELV (81 aa)). O-(pantetheine 4'-phosphoryl)serine is present on Ser-1673. Positions 1735–2127 (GQLPLSYLEK…QDLEVDMEYD (393 aa)) are condensation 2. Residues 2174–2200 (PVGLTPSHEGSAELTNGTNKTDSTTGQ) form a disordered region. Over residues 2186 to 2200 (ELTNGTNKTDSTTGQ) the composition is skewed to polar residues. Positions 2201–2273 (QELENNLTDV…LELATCAVII (73 aa)) constitute a Carrier 3 domain. At Ser-2235 the chain carries O-(pantetheine 4'-phosphoryl)serine.

It belongs to the NRP synthetase family. The cofactor is pantetheine 4'-phosphate.

Its pathway is secondary metabolite biosynthesis. Functionally, nonribosomal peptide synthetase; part of the gene cluster that mediates the biosynthesis of hexadehydro-astechrome (HAS), a tryptophan-derived iron(III)-complex that acts as a virulence factor in infected mice. Within the pathway, the NRPS condenses tryptophan and alanine to produce the Trp-Ala dipeptide. The 7-dimethylallyltryptophan synthase hasE then catalyzes the prenylation of the hasD-tethered tryptophan or the resulting tethered Trp-Ala dipeptide at the C-7 position of the indole moiety. HAS biosynthesis continues via tethered intermediates with the succesive actions of the cytochrome P450 monooxygenase hasH, the O-methyltransferase hasC, and the FAD-linked oxidoreductase hasG. The resulting O-methylated diketopiperazine is then released from hasD. Finally, three O-methylated diketopiperazine molecules assemble in a trimeric complex with Fe(III) to produce hexadehydro-astechrome. The polypeptide is Nonribosomal peptide synthetase hasD (Aspergillus fumigatus (strain CBS 144.89 / FGSC A1163 / CEA10) (Neosartorya fumigata)).